The primary structure comprises 196 residues: Mitochondrial inner membrane protein SHH3 (196 aa).

A mitochondrion-targeting transit peptide spans 1 to 53 (MKATIQRVTSVFGVPRASVFVPRISTPFILHNYISNGRMDLFSKEFHNGRVSK). At 54 to 97 (SDLWSSNKEEELLVSQRKKRPISPHLTVYEPEMSWYLSSLHRIS) the chain is on the mitochondrial matrix side. Residues serine 91 and arginine 95 each coordinate a ubiquinone. A helical transmembrane segment spans residues 98–118 (GVLLALGFYAFTITLGVTTIM). The Mitochondrial intermembrane portion of the chain corresponds to 119–137 (GMDTTFQDLNKWYHEKMPK). The helical transmembrane segment at 138-160 (WSQWVAKGSAAYLFAFHFGNGIR) threads the bilayer. A heme-binding site is contributed by histidine 154. Residues 161 to 174 (HLIWDMGYELTNRG) are Mitochondrial matrix-facing. Residues 175-195 (VIKTGSIVLAGTLVLGTYLLA) form a helical membrane-spanning segment. Glutamine 196 is a topological domain (mitochondrial intermembrane).

This sequence belongs to the cytochrome b560 family.

It localises to the mitochondrion inner membrane. Its function is as follows. Homolog of SDH3, but seems not to be a stoichiometric subunit of either the succinate dehydrogenase (SDH) complex or the mitochondrial inner membrane translocase TIM22 complex. This chain is Mitochondrial inner membrane protein SHH3, found in Saccharomyces cerevisiae (strain ATCC 204508 / S288c) (Baker's yeast).